Here is a 245-residue protein sequence, read N- to C-terminus: Polyhedrin (245 aa).

Belongs to the polyhedrin family.

Its function is as follows. Major component of the virus occlusion bodies, which are large proteinaceous structures (polyhedra), that protect the virus from the outside environment for extended periods until they are ingested by insect larvae. The protein is Polyhedrin (PH) of Orgyia pseudotsugata multicapsid polyhedrosis virus (OpMNPV).